The following is a 512-amino-acid chain: Cytochrome P450 monooxygenase 208 (512 aa).

A helical transmembrane segment spans residues 4–24 (LFLVLDTGAAVLLVALLFVVY). Cysteine 438 serves as a coordination point for heme.

This sequence belongs to the cytochrome P450 family. Heme is required as a cofactor.

It localises to the membrane. Its pathway is secondary metabolite biosynthesis. In terms of biological role, cytochrome P450 monooxygenase that is able to use 7-ethoxycoumarin as a substrate for oxidation. This Postia placenta (strain ATCC 44394 / Madison 698-R) (Brown rot fungus) protein is Cytochrome P450 monooxygenase 208.